Here is a 195-residue protein sequence, read N- to C-terminus: Imidazoleglycerol-phosphate dehydratase (195 aa).

The protein belongs to the imidazoleglycerol-phosphate dehydratase family.

It localises to the cytoplasm. It carries out the reaction D-erythro-1-(imidazol-4-yl)glycerol 3-phosphate = 3-(imidazol-4-yl)-2-oxopropyl phosphate + H2O. It participates in amino-acid biosynthesis; L-histidine biosynthesis; L-histidine from 5-phospho-alpha-D-ribose 1-diphosphate: step 6/9. In Heliobacterium modesticaldum (strain ATCC 51547 / Ice1), this protein is Imidazoleglycerol-phosphate dehydratase.